The sequence spans 236 residues: Leucyl/phenylalanyl-tRNA--protein transferase (236 aa).

This sequence belongs to the L/F-transferase family.

It localises to the cytoplasm. It catalyses the reaction N-terminal L-lysyl-[protein] + L-leucyl-tRNA(Leu) = N-terminal L-leucyl-L-lysyl-[protein] + tRNA(Leu) + H(+). It carries out the reaction N-terminal L-arginyl-[protein] + L-leucyl-tRNA(Leu) = N-terminal L-leucyl-L-arginyl-[protein] + tRNA(Leu) + H(+). The catalysed reaction is L-phenylalanyl-tRNA(Phe) + an N-terminal L-alpha-aminoacyl-[protein] = an N-terminal L-phenylalanyl-L-alpha-aminoacyl-[protein] + tRNA(Phe). Its function is as follows. Functions in the N-end rule pathway of protein degradation where it conjugates Leu, Phe and, less efficiently, Met from aminoacyl-tRNAs to the N-termini of proteins containing an N-terminal arginine or lysine. The polypeptide is Leucyl/phenylalanyl-tRNA--protein transferase (Vibrio atlanticus (strain LGP32) (Vibrio splendidus (strain Mel32))).